Consider the following 478-residue polypeptide: RNA pseudouridine synthase 3, mitochondrial (478 aa).

A mitochondrion-targeting transit peptide spans 1 to 20 (MWKAKTCFRQIYLTVLIRRY). The S4 RNA-binding domain maps to 92–162 (EEIYDKAIQT…MRISKRYDTI (71 aa)). Residue D232 is part of the active site.

The protein belongs to the pseudouridine synthase RluA family.

It localises to the mitochondrion. It carries out the reaction a uridine in RNA = a pseudouridine in RNA. The chain is RNA pseudouridine synthase 3, mitochondrial from Arabidopsis thaliana (Mouse-ear cress).